The following is a 60-amino-acid chain: Large ribosomal subunit protein bL32 (60 aa).

The tract at residues 1–47 (MAVQQNRKTRSKRGMRRSHDALTSSTLSTDPTTGEKHRRHHVTADGF) is disordered. Residues 7 to 16 (RKTRSKRGMR) are compositionally biased toward basic residues.

This sequence belongs to the bacterial ribosomal protein bL32 family.

This is Large ribosomal subunit protein bL32 from Teredinibacter turnerae (strain ATCC 39867 / T7901).